The sequence spans 409 residues: Arginine biosynthesis bifunctional protein ArgJ (409 aa).

Residues T157, K183, T194, E281, N404, and S409 each coordinate substrate. T194 (nucleophile) is an active-site residue.

Belongs to the ArgJ family. In terms of assembly, heterotetramer of two alpha and two beta chains.

Its subcellular location is the cytoplasm. The enzyme catalyses N(2)-acetyl-L-ornithine + L-glutamate = N-acetyl-L-glutamate + L-ornithine. The catalysed reaction is L-glutamate + acetyl-CoA = N-acetyl-L-glutamate + CoA + H(+). The protein operates within amino-acid biosynthesis; L-arginine biosynthesis; L-ornithine and N-acetyl-L-glutamate from L-glutamate and N(2)-acetyl-L-ornithine (cyclic): step 1/1. It participates in amino-acid biosynthesis; L-arginine biosynthesis; N(2)-acetyl-L-ornithine from L-glutamate: step 1/4. Its function is as follows. Catalyzes two activities which are involved in the cyclic version of arginine biosynthesis: the synthesis of N-acetylglutamate from glutamate and acetyl-CoA as the acetyl donor, and of ornithine by transacetylation between N(2)-acetylornithine and glutamate. This is Arginine biosynthesis bifunctional protein ArgJ from Zymomonas mobilis subsp. mobilis (strain ATCC 31821 / ZM4 / CP4).